A 150-amino-acid polypeptide reads, in one-letter code: MPSILLINGPNLNLLGTREPHLYGRTTLPQLEDNAKALAAAKGVKLESFHSNHEGRIIDRIHEARGHTDAIIINPGAFTHTSVAIRDALIGVSVPFIEVHITNVHAREEFRHHSYLSDKAAACIIGLGTYGYEAAIEYAAREIISAKEVY.

Y23 functions as the Proton acceptor in the catalytic mechanism. The substrate site is built by N74, H80, and D87. H100 (proton donor) is an active-site residue. Substrate contacts are provided by residues 101–102 and R111; that span reads IT.

This sequence belongs to the type-II 3-dehydroquinase family. In terms of assembly, homododecamer. Adopts a ring-like structure, composed of an arrangement of two hexameric rings stacked on top of one another.

The enzyme catalyses 3-dehydroquinate = 3-dehydroshikimate + H2O. It participates in aromatic compound metabolism; 3,4-dihydroxybenzoate biosynthesis; 3,4-dihydroxybenzoate from 3-dehydroquinate: step 1/2. In terms of biological role, is involved in the catabolism of quinate. Allows the utilization of quinate as carbon source via the beta-ketoadipate pathway. This chain is Catabolic 3-dehydroquinase 2, found in Aspergillus fumigatus (strain ATCC MYA-4609 / CBS 101355 / FGSC A1100 / Af293) (Neosartorya fumigata).